The primary structure comprises 214 residues: Killer cell lectin-like receptor subfamily B member 1 (214 aa).

Residues 1–42 (MDAPVLYAELHLANTQGLRCTSPPSPRQDACWGSGWHRVALK) are Cytoplasmic-facing. Residues 43–63 (LGCVGLILLLMGLSVLVGFLV) traverse the membrane as a helical; Signal-anchor for type II membrane protein segment. At 64–214 (QKPPIEKCSV…WICQKTLKRV (151 aa)) the chain is on the extracellular side. Residues 98 to 208 (HWNKCLFISQ…CSSDNHWICQ (111 aa)) enclose the C-type lectin domain. 2 disulfide bridges follow: Cys-119-Cys-207 and Cys-186-Cys-199.

It is found in the membrane. The chain is Killer cell lectin-like receptor subfamily B member 1 (Klrb1) from Rattus norvegicus (Rat).